Reading from the N-terminus, the 1005-residue chain is Defense-associated sirtuin 2 (1005 aa).

The segment at 1–295 (MVKVDLESKR…YSAVMDLLIE (295 aa)) is SIR2. The tract at residues 56–111 (YPQWWRLVDKYHEELYGSPKKGNYSSDEYLRIPQIFYNVKGEMAFDGILKDFFQVD) is inter-dimer interaction. Active-site residues include tyrosine 134, aspartate 135, and histidine 171. Residues 296-548 (SQENKFITKD…YKILEFLSDN (253 aa)) form an MID region. The segment at 549 to 1005 (QFLYDDTVKL…YLEILMNYFI (457 aa)) is CTD.

In terms of assembly, homotetramer (dimer of dimers). Homodimer. The SIR2 domains are arranged in a central core, adopting a head-to-head arrangement, while the CTDs are positioned at the periphery of the complex. Tetramerization is necessary for the activation of NADase activity. The NADase enzymatic activity of this homotetrameric form is autoinhibited. The activated form of DSR2 (after binding to the phage tube protein) exists as tetramers and dimers, with the tetramers exhibiting more NADase activity. Each tetramer binds 4 NAD(+) molecules. As to quaternary structure, (Microbial infection) Interacts (via C-terminus) with phage SPR tail tube monomer protein (via N-terminus) in a 4:4 DSR2-Tube assembly; this interaction induces a conformation change of the tube protein and activates the NADase activity of DSR2. (Microbial infection) Interacts (via C-terminus) with phage SPbeta DSAD1 in a 4:2 ratio; this interaction prevents activation of the NADase defense activity of DSR2.

The catalysed reaction is NAD(+) + H2O = ADP-D-ribose + nicotinamide + H(+). (Microbial infection) NADase activity is activated through the binding of SPR phage tail tube monomer protein. NADase activity is inhibited through the binding to the phage SPbeta DSR anti-defense 1 (DSAD1). Its function is as follows. Anti-phage defense protein that is activated through the binding to the phage tail tube protein monomer and which hydrolyzes NAD+ upon activation (NADase activity). The resulting depletion of NAD(+) leads to an abortive infection. The polypeptide is Defense-associated sirtuin 2 (Bacillus subtilis).